The primary structure comprises 377 residues: Alanine racemase (377 aa).

Catalysis depends on Lys35, which acts as the Proton acceptor; specific for D-alanine. Lys35 bears the N6-(pyridoxal phosphate)lysine mark. Arg130 provides a ligand contact to substrate. Tyr260 functions as the Proton acceptor; specific for L-alanine in the catalytic mechanism. Met312 is a binding site for substrate.

This sequence belongs to the alanine racemase family. Requires pyridoxal 5'-phosphate as cofactor.

It catalyses the reaction L-alanine = D-alanine. The protein operates within amino-acid biosynthesis; D-alanine biosynthesis; D-alanine from L-alanine: step 1/1. Catalyzes the interconversion of L-alanine and D-alanine. May also act on other amino acids. This is Alanine racemase (alr) from Leptothrix cholodnii (strain ATCC 51168 / LMG 8142 / SP-6) (Leptothrix discophora (strain SP-6)).